A 61-amino-acid polypeptide reads, in one-letter code: MPFVTIQFLEGRTDDQKKALVSEVTEVVAKNLKAPKENIHVILEEMKKTDYGVGGVRKSDI.

Pro2 serves as the catalytic Proton acceptor; via imino nitrogen.

The protein belongs to the 4-oxalocrotonate tautomerase family.

The sequence is that of Probable tautomerase LMOf2365_2536 from Listeria monocytogenes serotype 4b (strain F2365).